We begin with the raw amino-acid sequence, 331 residues long: Flagellar P-ring protein (331 aa).

An N-terminal signal peptide occupies residues 1–25 (MKKRLAVLLVIVLTITFSFSVTTRI).

It belongs to the FlgI family. The basal body constitutes a major portion of the flagellar organelle and consists of four rings (L,P,S, and M) mounted on a central rod.

It localises to the periplasm. The protein localises to the bacterial flagellum basal body. Its function is as follows. Assembles around the rod to form the L-ring and probably protects the motor/basal body from shearing forces during rotation. The sequence is that of Flagellar P-ring protein from Thermotoga petrophila (strain ATCC BAA-488 / DSM 13995 / JCM 10881 / RKU-1).